The following is a 201-amino-acid chain: Large ribosomal subunit protein uL4 (201 aa).

Residues 44–71 form a disordered region; it reads RAQKTRAEVSGSGKKPWRQKGTGRARSG.

It belongs to the universal ribosomal protein uL4 family. As to quaternary structure, part of the 50S ribosomal subunit.

One of the primary rRNA binding proteins, this protein initially binds near the 5'-end of the 23S rRNA. It is important during the early stages of 50S assembly. It makes multiple contacts with different domains of the 23S rRNA in the assembled 50S subunit and ribosome. Functionally, forms part of the polypeptide exit tunnel. The chain is Large ribosomal subunit protein uL4 from Actinobacillus succinogenes (strain ATCC 55618 / DSM 22257 / CCUG 43843 / 130Z).